Reading from the N-terminus, the 352-residue chain is DNA integrity scanning protein DisA (352 aa).

In terms of domain architecture, DAC spans 3-143 (PQELIEKIKL…NYKYVVNQVD (141 aa)). ATP-binding positions include G71, L89, and 102 to 106 (TRHRT).

It belongs to the DisA family. In terms of assembly, homooctamer. Mg(2+) serves as cofactor.

It carries out the reaction 2 ATP = 3',3'-c-di-AMP + 2 diphosphate. Participates in a DNA-damage check-point. DisA forms globular foci that rapidly scan along the chromosomes searching for lesions. In terms of biological role, also has diadenylate cyclase activity, catalyzing the condensation of 2 ATP molecules into cyclic di-AMP (c-di-AMP). c-di-AMP likely acts as a signaling molecule that may couple DNA integrity with a cellular process. The chain is DNA integrity scanning protein DisA from Thermotoga neapolitana (strain ATCC 49049 / DSM 4359 / NBRC 107923 / NS-E).